Here is a 426-residue protein sequence, read N- to C-terminus: Glucose-6-phosphate isomerase (426 aa).

Glu-282 acts as the Proton donor in catalysis. Residues His-303 and Lys-417 contribute to the active site.

Belongs to the GPI family.

The protein localises to the cytoplasm. The enzyme catalyses alpha-D-glucose 6-phosphate = beta-D-fructose 6-phosphate. It participates in carbohydrate biosynthesis; gluconeogenesis. It functions in the pathway carbohydrate degradation; glycolysis; D-glyceraldehyde 3-phosphate and glycerone phosphate from D-glucose: step 2/4. Catalyzes the reversible isomerization of glucose-6-phosphate to fructose-6-phosphate. In Onion yellows phytoplasma (strain OY-M), this protein is Glucose-6-phosphate isomerase.